Reading from the N-terminus, the 342-residue chain is Methylthioribose-1-phosphate isomerase (342 aa).

Substrate is bound by residues 49–51 (RGA), R86, and Q187. The Proton donor role is filled by D228. A substrate-binding site is contributed by 238 to 239 (NK).

Belongs to the eIF-2B alpha/beta/delta subunits family. MtnA subfamily.

It catalyses the reaction 5-(methylsulfanyl)-alpha-D-ribose 1-phosphate = 5-(methylsulfanyl)-D-ribulose 1-phosphate. It functions in the pathway amino-acid biosynthesis; L-methionine biosynthesis via salvage pathway; L-methionine from S-methyl-5-thio-alpha-D-ribose 1-phosphate: step 1/6. In terms of biological role, catalyzes the interconversion of methylthioribose-1-phosphate (MTR-1-P) into methylthioribulose-1-phosphate (MTRu-1-P). This chain is Methylthioribose-1-phosphate isomerase, found in Citrobacter koseri (strain ATCC BAA-895 / CDC 4225-83 / SGSC4696).